A 400-amino-acid chain; its full sequence is Subtilisin-like protease 11 (400 aa).

The first 19 residues, 1–19 (MGLFKVIFTAVAALSAVDA), serve as a signal peptide directing secretion. Residues 20 to 117 (AELLSSAKSK…VEHDRHVYIS (98 aa)) constitute a propeptide that is removed on maturation. The Inhibitor I9 domain occupies 35–116 (SYLVVMKDSV…FVEHDRHVYI (82 aa)). One can recognise a Peptidase S8 domain in the interval 127 to 400 (SWGLGRVSHR…NKLLYNRSGK (274 aa)). An N-linked (GlcNAc...) asparagine glycan is attached at Asn138. Catalysis depends on Asp159, which acts as the Charge relay system. A glycan (N-linked (GlcNAc...) asparagine) is linked at Asn181. Catalysis depends on His191, which acts as the Charge relay system. 2 N-linked (GlcNAc...) asparagine glycosylation sites follow: Asn252 and Asn337. Residue Ser346 is the Charge relay system of the active site. N-linked (GlcNAc...) asparagine glycosylation is found at Asn388 and Asn396.

It belongs to the peptidase S8 family.

The protein localises to the secreted. Its function is as follows. Secreted subtilisin-like serine protease with keratinolytic activity that contributes to pathogenicity. The polypeptide is Subtilisin-like protease 11 (SUB11) (Trichophyton verrucosum (strain HKI 0517)).